A 176-amino-acid chain; its full sequence is Large ribosomal subunit protein uL10 (176 aa).

It belongs to the universal ribosomal protein uL10 family. Part of the ribosomal stalk of the 50S ribosomal subunit. The N-terminus interacts with L11 and the large rRNA to form the base of the stalk. The C-terminus forms an elongated spine to which L12 dimers bind in a sequential fashion forming a multimeric L10(L12)X complex.

In terms of biological role, forms part of the ribosomal stalk, playing a central role in the interaction of the ribosome with GTP-bound translation factors. This Streptomyces coelicolor (strain ATCC BAA-471 / A3(2) / M145) protein is Large ribosomal subunit protein uL10 (rplJ).